Reading from the N-terminus, the 61-residue chain is MAKKSQIVKWLKPKKYKVREYNRCRICGRPRGYIRKFGLCRLCFRELALKGEIPGVRKASW.

C24, C27, C40, and C43 together coordinate Zn(2+).

The protein belongs to the universal ribosomal protein uS14 family. Zinc-binding uS14 subfamily. Part of the 30S ribosomal subunit. Contacts proteins S3 and S10. The cofactor is Zn(2+).

Functionally, binds 16S rRNA, required for the assembly of 30S particles and may also be responsible for determining the conformation of the 16S rRNA at the A site. The chain is Small ribosomal subunit protein uS14 from Dictyoglomus turgidum (strain DSM 6724 / Z-1310).